The primary structure comprises 227 residues: Cytochrome c oxidase subunit 2 (227 aa).

Residues 1 to 14 (MAHAAQVGLQDATS) are Mitochondrial intermembrane-facing. A helical transmembrane segment spans residues 15–45 (PIMEELITFHDHALMIIFLICFLVLYALFLT). Residues 46–59 (LTTKLTNTNISDAQ) lie on the Mitochondrial matrix side of the membrane. A helical transmembrane segment spans residues 60-87 (EMETVWTILPAIILVLIALPSLRILYMT). Over 88–227 (DEVNDPSLTI…IFEMGPVFTL (140 aa)) the chain is Mitochondrial intermembrane. Cu cation is bound by residues His-161, Cys-196, Glu-198, Cys-200, His-204, and Met-207. Glu-198 contacts Mg(2+).

Belongs to the cytochrome c oxidase subunit 2 family. Component of the cytochrome c oxidase (complex IV, CIV), a multisubunit enzyme composed of 14 subunits. The complex is composed of a catalytic core of 3 subunits MT-CO1, MT-CO2 and MT-CO3, encoded in the mitochondrial DNA, and 11 supernumerary subunits COX4I1 (or COX4I2), COX5A, COX5B, COX6A1 (or COX6A2), COX6B1 (or COX6B2), COX6C, COX7A2 (or COX7A1), COX7B, COX7C, COX8A and NDUFA4, which are encoded in the nuclear genome. The complex exists as a monomer or a dimer and forms supercomplexes (SCs) in the inner mitochondrial membrane with NADH-ubiquinone oxidoreductase (complex I, CI) and ubiquinol-cytochrome c oxidoreductase (cytochrome b-c1 complex, complex III, CIII), resulting in different assemblies (supercomplex SCI(1)III(2)IV(1) and megacomplex MCI(2)III(2)IV(2)). Found in a complex with TMEM177, COA6, COX18, COX20, SCO1 and SCO2. Interacts with TMEM177 in a COX20-dependent manner. Interacts with COX20. Interacts with COX16. The cofactor is Cu cation.

The protein localises to the mitochondrion inner membrane. The catalysed reaction is 4 Fe(II)-[cytochrome c] + O2 + 8 H(+)(in) = 4 Fe(III)-[cytochrome c] + 2 H2O + 4 H(+)(out). In terms of biological role, component of the cytochrome c oxidase, the last enzyme in the mitochondrial electron transport chain which drives oxidative phosphorylation. The respiratory chain contains 3 multisubunit complexes succinate dehydrogenase (complex II, CII), ubiquinol-cytochrome c oxidoreductase (cytochrome b-c1 complex, complex III, CIII) and cytochrome c oxidase (complex IV, CIV), that cooperate to transfer electrons derived from NADH and succinate to molecular oxygen, creating an electrochemical gradient over the inner membrane that drives transmembrane transport and the ATP synthase. Cytochrome c oxidase is the component of the respiratory chain that catalyzes the reduction of oxygen to water. Electrons originating from reduced cytochrome c in the intermembrane space (IMS) are transferred via the dinuclear copper A center (CU(A)) of subunit 2 and heme A of subunit 1 to the active site in subunit 1, a binuclear center (BNC) formed by heme A3 and copper B (CU(B)). The BNC reduces molecular oxygen to 2 water molecules using 4 electrons from cytochrome c in the IMS and 4 protons from the mitochondrial matrix. In Homo sapiens (Human), this protein is Cytochrome c oxidase subunit 2 (MT-CO2).